The following is a 199-amino-acid chain: GTP cyclohydrolase 1 (199 aa).

Residues cysteine 89, histidine 92, and cysteine 161 each coordinate Zn(2+).

This sequence belongs to the GTP cyclohydrolase I family. Toroid-shaped homodecamer, composed of two pentamers of five dimers.

It catalyses the reaction GTP + H2O = 7,8-dihydroneopterin 3'-triphosphate + formate + H(+). It functions in the pathway cofactor biosynthesis; 7,8-dihydroneopterin triphosphate biosynthesis; 7,8-dihydroneopterin triphosphate from GTP: step 1/1. In Bifidobacterium longum (strain NCC 2705), this protein is GTP cyclohydrolase 1.